A 657-amino-acid polypeptide reads, in one-letter code: Methylenetetrahydrofolate reductase 1 (657 aa).

Catalysis depends on Glu-18, which acts as the Proton donor/acceptor. NAD(+)-binding positions include Glu-18 to Lys-23 and Thr-49 to Trp-50. FAD contacts are provided by residues Thr-49–Trp-50, His-78, and Arg-108–Asp-110. Asp-110 contacts substrate. Ser-120 bears the Phosphoserine mark. FAD-binding positions include Tyr-129–Ala-130, Tyr-152, Asp-171, and Lys-178. Residues Gln-189 and Tyr-286 each contribute to the substrate site. At Ser-301 the chain carries Phosphoserine. The tract at residues Val-308 to Asn-329 is disordered. The span at Ser-311–Ser-321 shows a compositional bias: acidic residues. Ser-358 bears the Phosphoserine mark.

It belongs to the methylenetetrahydrofolate reductase family. FAD is required as a cofactor.

It carries out the reaction (6S)-5-methyl-5,6,7,8-tetrahydrofolate + NADP(+) = (6R)-5,10-methylene-5,6,7,8-tetrahydrofolate + NADPH + H(+). It catalyses the reaction (6S)-5-methyl-5,6,7,8-tetrahydrofolate + NAD(+) = (6R)-5,10-methylene-5,6,7,8-tetrahydrofolate + NADH + H(+). The protein operates within one-carbon metabolism; tetrahydrofolate interconversion. This is Methylenetetrahydrofolate reductase 1 (MET12) from Saccharomyces cerevisiae (strain ATCC 204508 / S288c) (Baker's yeast).